A 500-amino-acid chain; its full sequence is Probable cytosol aminopeptidase (500 aa).

The Mn(2+) site is built by Lys-262 and Asp-267. Lys-274 is an active-site residue. Residues Asp-285, Asp-344, and Glu-346 each contribute to the Mn(2+) site. The active site involves Arg-348.

The protein belongs to the peptidase M17 family. Mn(2+) is required as a cofactor.

Its subcellular location is the cytoplasm. It carries out the reaction Release of an N-terminal amino acid, Xaa-|-Yaa-, in which Xaa is preferably Leu, but may be other amino acids including Pro although not Arg or Lys, and Yaa may be Pro. Amino acid amides and methyl esters are also readily hydrolyzed, but rates on arylamides are exceedingly low.. It catalyses the reaction Release of an N-terminal amino acid, preferentially leucine, but not glutamic or aspartic acids.. Functionally, presumably involved in the processing and regular turnover of intracellular proteins. Catalyzes the removal of unsubstituted N-terminal amino acids from various peptides. The chain is Probable cytosol aminopeptidase from Ehrlichia ruminantium (strain Gardel).